Reading from the N-terminus, the 274-residue chain is Tryptophan synthase alpha chain (274 aa).

Catalysis depends on proton acceptor residues E49 and D60.

Belongs to the TrpA family. In terms of assembly, tetramer of two alpha and two beta chains.

It carries out the reaction (1S,2R)-1-C-(indol-3-yl)glycerol 3-phosphate + L-serine = D-glyceraldehyde 3-phosphate + L-tryptophan + H2O. It functions in the pathway amino-acid biosynthesis; L-tryptophan biosynthesis; L-tryptophan from chorismate: step 5/5. In terms of biological role, the alpha subunit is responsible for the aldol cleavage of indoleglycerol phosphate to indole and glyceraldehyde 3-phosphate. In Zymomonas mobilis subsp. mobilis (strain ATCC 31821 / ZM4 / CP4), this protein is Tryptophan synthase alpha chain.